The primary structure comprises 144 residues: Large ribosomal subunit protein uL15 (144 aa).

Residues 1-57 (MFLNTLRPGEGSKHAPKRVGRGIGSGLGKTGGRGHKGLKSRSGGSVKPGFEGGQMPL) form a disordered region. A compositionally biased stretch (gly residues) spans 21–31 (RGIGSGLGKTG).

The protein belongs to the universal ribosomal protein uL15 family. As to quaternary structure, part of the 50S ribosomal subunit.

In terms of biological role, binds to the 23S rRNA. The sequence is that of Large ribosomal subunit protein uL15 from Marinomonas sp. (strain MWYL1).